The following is a 1012-amino-acid chain: Ankyrin repeat- and BTB/POZ domain-containing protein 3-B (1012 aa).

The helical transmembrane segment at 160-180 (ILSWTISVNCIAASLSALSMY) threads the bilayer. ANK repeat units follow at residues 511-540 (QGMTPLMYACVRGDEAMVQMLLDAGADINS), 557-586 (RQATPLTFAVLHQHIPVVQLLLDAGANVEG), and 595-624 (YTETPLQLASAAGNFELVSLLLERGADPMI). Residues 831–897 (SDVTFLVEGK…LYCGGTDALH (67 aa)) form the BTB domain.

It is found in the membrane. The chain is Ankyrin repeat- and BTB/POZ domain-containing protein 3-B (abtb3b) from Danio rerio (Zebrafish).